Reading from the N-terminus, the 758-residue chain is Xaa-Pro dipeptidyl-peptidase (758 aa).

Catalysis depends on charge relay system residues S349, D469, and H499.

It belongs to the peptidase S15 family. As to quaternary structure, homodimer.

The protein resides in the cytoplasm. It carries out the reaction Hydrolyzes Xaa-Pro-|- bonds to release unblocked, N-terminal dipeptides from substrates including Ala-Pro-|-p-nitroanilide and (sequentially) Tyr-Pro-|-Phe-Pro-|-Gly-Pro-|-Ile.. Removes N-terminal dipeptides sequentially from polypeptides having unsubstituted N-termini provided that the penultimate residue is proline. This Streptococcus uberis (strain ATCC BAA-854 / 0140J) protein is Xaa-Pro dipeptidyl-peptidase.